A 138-amino-acid chain; its full sequence is Ferredoxin-2 (138 aa).

A 2Fe-2S ferredoxin-type domain is found at 27–117; it reads ADANLQSTDF…DAKIVYNLKH (91 aa). The [2Fe-2S] cluster site is built by Cys-62, Cys-67, Cys-70, and Cys-100.

Belongs to the 2Fe2S plant-type ferredoxin family. [2Fe-2S] cluster serves as cofactor.

Ferredoxins are iron-sulfur proteins that transfer electrons in a wide variety of metabolic reactions. The chain is Ferredoxin-2 (fer2) from Haloarcula marismortui (strain ATCC 43049 / DSM 3752 / JCM 8966 / VKM B-1809) (Halobacterium marismortui).